The primary structure comprises 428 residues: uncharacterized protein (428 aa).

The tract at residues 72–91 is disordered; that stretch reads SQGSPVAPSPNHRSTMYSSS. A Phosphoserine modification is found at Ser127.

This is an uncharacterized protein from Saccharomyces cerevisiae (strain ATCC 204508 / S288c) (Baker's yeast).